The sequence spans 736 residues: DNA topoisomerase 1 (736 aa).

The region spanning 2 to 113 (KHLIIVESPA…SYPRIVFHEI (112 aa)) is the Toprim domain. The Mg(2+) site is built by Glu-8 and Asp-82. In terms of domain architecture, Topo IA-type catalytic spans 129–552 (DMFKVNAQQA…DFYYPFMDKI (424 aa)). The tract at residues 163–168 (SAGRVQ) is interaction with DNA. Catalysis depends on Tyr-297, which acts as the O-(5'-phospho-DNA)-tyrosine intermediate. C4-type zinc fingers lie at residues 572–598 (CPKC…YPKC), 616–642 (CEKC…YPEC), 663–689 (CPEC…YPKC), and 702–725 (CEKC…CIQC).

The protein belongs to the type IA topoisomerase family. Monomer. It depends on Mg(2+) as a cofactor.

The enzyme catalyses ATP-independent breakage of single-stranded DNA, followed by passage and rejoining.. Releases the supercoiling and torsional tension of DNA, which is introduced during the DNA replication and transcription, by transiently cleaving and rejoining one strand of the DNA duplex. Introduces a single-strand break via transesterification at a target site in duplex DNA. The scissile phosphodiester is attacked by the catalytic tyrosine of the enzyme, resulting in the formation of a DNA-(5'-phosphotyrosyl)-enzyme intermediate and the expulsion of a 3'-OH DNA strand. The free DNA strand then undergoes passage around the unbroken strand, thus removing DNA supercoils. Finally, in the religation step, the DNA 3'-OH attacks the covalent intermediate to expel the active-site tyrosine and restore the DNA phosphodiester backbone. This Helicobacter pylori (strain J99 / ATCC 700824) (Campylobacter pylori J99) protein is DNA topoisomerase 1.